A 438-amino-acid chain; its full sequence is MNKKVKIIGAGLAGCEAAYFLANNNIQVELYEVKTLIKNEVQKTNNFAELVCFNTFRSQSLLNAAGILKAEMRRLNSLVIKIADGCKIDGDDALAVDREDFSKKLTEVIKNHPNITIIEQNVSHIDDENDLTLIATGPLTTNELKEDIQRLIGKQKLFFIDASASIITKDSIDFNKVYYSGRHKLGKYICCPLNEQEFNEFADNLINAEQVQLKEFEKSIFFKGCQPIEQLAKTSKKLLLKGPMSPNNLLDQNNHQPYSVVQLRQDDAKDSLYNMVGFQTNLKWPEQKRVFQTIPGLEKAKIVRYGVMHKNYYINSPKILNFKLQVMRKKNVFFAGQITGVEGYIESASSGIWAAINILAFINNKKIKPLPNTTILGALTNYITNSKIYSLKPMKCNLAILEQENKYQSNDKFYSFNNSKNSLEEYIKQLNQILGTSI.

G9 to G14 serves as a coordination point for FAD.

Belongs to the MnmG family. TrmFO subfamily. The cofactor is FAD.

It is found in the cytoplasm. It catalyses the reaction uridine(54) in tRNA + (6R)-5,10-methylene-5,6,7,8-tetrahydrofolate + NADH + H(+) = 5-methyluridine(54) in tRNA + (6S)-5,6,7,8-tetrahydrofolate + NAD(+). The enzyme catalyses uridine(54) in tRNA + (6R)-5,10-methylene-5,6,7,8-tetrahydrofolate + NADPH + H(+) = 5-methyluridine(54) in tRNA + (6S)-5,6,7,8-tetrahydrofolate + NADP(+). Catalyzes the folate-dependent formation of 5-methyl-uridine at position 54 (M-5-U54) in all tRNAs. The polypeptide is Methylenetetrahydrofolate--tRNA-(uracil-5-)-methyltransferase TrmFO 2 (Mycoplasma mycoides subsp. mycoides SC (strain CCUG 32753 / NCTC 10114 / PG1)).